The following is a 201-amino-acid chain: 8-oxoguanine DNA glycosylase/AP lyase (201 aa).

Active-site residues include Lys126 and Asp144.

It belongs to the type-2 OGG1 family.

The catalysed reaction is 2'-deoxyribonucleotide-(2'-deoxyribose 5'-phosphate)-2'-deoxyribonucleotide-DNA = a 3'-end 2'-deoxyribonucleotide-(2,3-dehydro-2,3-deoxyribose 5'-phosphate)-DNA + a 5'-end 5'-phospho-2'-deoxyribonucleoside-DNA + H(+). Catalyzes the excision of an oxidatively damaged form of guanine (7,8-dihydro-8-oxoguanine = 8-oxoG) from DNA. Also cleaves the DNA backbone at apurinic/apyrimidinic sites (AP sites). This chain is 8-oxoguanine DNA glycosylase/AP lyase, found in Metallosphaera sedula (strain ATCC 51363 / DSM 5348 / JCM 9185 / NBRC 15509 / TH2).